Here is a 594-residue protein sequence, read N- to C-terminus: Alpha-1,4-glucan:maltose-1-phosphate maltosyltransferase (594 aa).

The disordered stretch occupies residues Asn244–Gly270. Alpha-maltose 1-phosphate contacts are provided by Lys246, Gln306, and Asp341. Asp377 serves as the catalytic Nucleophile. Asn378 contributes to the alpha-maltose 1-phosphate binding site. The Proton donor role is filled by Glu406. Lys517–Tyr518 is a binding site for alpha-maltose 1-phosphate.

The protein belongs to the glycosyl hydrolase 13 family. GlgE subfamily. In terms of assembly, homodimer.

It catalyses the reaction alpha-maltose 1-phosphate + [(1-&gt;4)-alpha-D-glucosyl](n) = [(1-&gt;4)-alpha-D-glucosyl](n+2) + phosphate. Maltosyltransferase that uses maltose 1-phosphate (M1P) as the sugar donor to elongate linear or branched alpha-(1-&gt;4)-glucans. Is involved in a branched alpha-glucan biosynthetic pathway from trehalose, together with TreS, Mak and GlgB. In Cereibacter sphaeroides (Rhodobacter sphaeroides), this protein is Alpha-1,4-glucan:maltose-1-phosphate maltosyltransferase.